Reading from the N-terminus, the 413-residue chain is Elongation factor 1-alpha (413 aa).

The region spanning 5 to 211 (KEHMNLAFIG…DDLEAPEKPV (207 aa)) is the tr-type G domain. The segment at 14 to 21 (GHVDHGKS) is G1. GTP is bound at residue 14–21 (GHVDHGKS). S21 is a binding site for Mg(2+). The tract at residues 60 to 64 (GVTID) is G2. The tract at residues 81–84 (DCPG) is G3. GTP-binding positions include 81–85 (DCPGH) and 136–139 (NKMD). The interval 136 to 139 (NKMD) is G4. The segment at 175–177 (SAF) is G5.

Belongs to the TRAFAC class translation factor GTPase superfamily. Classic translation factor GTPase family. EF-Tu/EF-1A subfamily.

It is found in the cytoplasm. It carries out the reaction GTP + H2O = GDP + phosphate + H(+). Functionally, GTP hydrolase that promotes the GTP-dependent binding of aminoacyl-tRNA to the A-site of ribosomes during protein biosynthesis. The sequence is that of Elongation factor 1-alpha from Methanothermobacter thermautotrophicus (strain ATCC 29096 / DSM 1053 / JCM 10044 / NBRC 100330 / Delta H) (Methanobacterium thermoautotrophicum).